Consider the following 95-residue polypeptide: Cell division topological specificity factor (95 aa).

The protein belongs to the MinE family.

Its function is as follows. Prevents the cell division inhibition by proteins MinC and MinD at internal division sites while permitting inhibition at polar sites. This ensures cell division at the proper site by restricting the formation of a division septum at the midpoint of the long axis of the cell. The sequence is that of Cell division topological specificity factor from Methylorubrum extorquens (strain PA1) (Methylobacterium extorquens).